The sequence spans 274 residues: Endonuclease 8-like L720 (274 aa).

Residues 241 to 274 (RIYRKSLCPLGHKTIRKKIGLRNRMTTWCPVCQL) form an FPG-type; degenerate zinc finger.

The protein belongs to the FPG family.

The chain is Endonuclease 8-like L720 from Acanthamoeba polyphaga mimivirus (APMV).